Consider the following 346-residue polypeptide: Cell division protein ZipA (346 aa).

Residues Met-1 to Leu-6 lie on the Periplasmic side of the membrane. A helical membrane pass occupies residues Val-7 to Ile-27. The Cytoplasmic portion of the chain corresponds to Arg-28–Ala-346. Residues Glu-116–Val-146 are disordered.

The protein belongs to the ZipA family. As to quaternary structure, interacts with FtsZ via their C-terminal domains.

The protein resides in the cell inner membrane. Its function is as follows. Essential cell division protein that stabilizes the FtsZ protofilaments by cross-linking them and that serves as a cytoplasmic membrane anchor for the Z ring. Also required for the recruitment to the septal ring of downstream cell division proteins. In Shewanella sp. (strain ANA-3), this protein is Cell division protein ZipA.